The following is a 160-amino-acid chain: Cytochrome b6-f complex subunit 4 (160 aa).

Over 1–35 (MATLKKPDLSDPKLRAKLAKGMGHNYYGEPAWPND) the chain is Cytoplasmic. Residues 36–56 (LLYVFPVVIMGTFACIVALSV) form a helical membrane-spanning segment. Residues 57-94 (LDPAMVGEPADPFATPLEILPEWYLYPVFQILRSVPNK) are Lumenal, thylakoid-facing. The helical transmembrane segment at 95-115 (LLGVLLMASVPLGLILVPFIE) threads the bilayer. The Cytoplasmic portion of the chain corresponds to 116-130 (NVNKFQNPFRRPVAT). The chain crosses the membrane as a helical span at residues 131–151 (TIFLFGTLVTIWLGIGATFPL). Residues 152–160 (DKTLTLGLF) lie on the Lumenal, thylakoid side of the membrane.

This sequence belongs to the cytochrome b family. PetD subfamily. In terms of assembly, the 4 large subunits of the cytochrome b6-f complex are cytochrome b6, subunit IV (17 kDa polypeptide, PetD), cytochrome f and the Rieske protein, while the 4 small subunits are PetG, PetL, PetM and PetN. The complex functions as a dimer.

It localises to the cellular thylakoid membrane. Its function is as follows. Component of the cytochrome b6-f complex, which mediates electron transfer between photosystem II (PSII) and photosystem I (PSI), cyclic electron flow around PSI, and state transitions. This is Cytochrome b6-f complex subunit 4 from Mastigocladus laminosus (Fischerella sp.).